Consider the following 808-residue polypeptide: Probable mannosyl-oligosaccharide glucosidase (808 aa).

The Cytoplasmic portion of the chain corresponds to 1–11; sequence MVSDMLGGNKR. The chain crosses the membrane as a helical; Signal-anchor for type II membrane protein span at residues 12-31; it reads WILFGLLSFLLNCVLVSCSV. Topologically, residues 32 to 808 are lumenal; the sequence is EDIEKAANDS…LVVNIMSENY (777 aa). N39 carries N-linked (GlcNAc...) asparagine glycosylation. The active-site Proton donor is D580. E778 functions as the Proton acceptor in the catalytic mechanism.

It belongs to the glycosyl hydrolase 63 family.

The protein resides in the endoplasmic reticulum membrane. The enzyme catalyses N(4)-(alpha-D-Glc-(1-&gt;2)-alpha-D-Glc-(1-&gt;3)-alpha-D-Glc-(1-&gt;3)-alpha-D-Man-(1-&gt;2)-alpha-D-Man-(1-&gt;2)-alpha-D-Man-(1-&gt;3)-[alpha-D-Man-(1-&gt;2)-alpha-D-Man-(1-&gt;3)-[alpha-D-Man-(1-&gt;2)-alpha-D-Man-(1-&gt;6)]-alpha-D-Man-(1-&gt;6)]-beta-D-Man-(1-&gt;4)-beta-D-GlcNAc-(1-&gt;4)-beta-D-GlcNAc)-L-asparaginyl-[protein] + H2O = N(4)-(alpha-D-Glc-(1-&gt;3)-alpha-D-Glc-(1-&gt;3)-alpha-D-Man-(1-&gt;2)-alpha-D-Man-(1-&gt;2)-alpha-D-Man-(1-&gt;3)-[alpha-D-Man-(1-&gt;2)-alpha-D-Man-(1-&gt;3)-[alpha-D-Man-(1-&gt;2)-alpha-D-Man-(1-&gt;6)]-alpha-D-Man-(1-&gt;6)]-beta-D-Man-(1-&gt;4)-beta-D-GlcNAc-(1-&gt;4)-beta-D-GlcNAc)-L-asparaginyl-[protein] + beta-D-glucose. Cleaves the distal alpha 1,2-linked glucose residue from the Glc(3)Man(9)GlcNAc(2) oligosaccharide precursor highly specifically. This chain is Probable mannosyl-oligosaccharide glucosidase, found in Schizosaccharomyces pombe (strain 972 / ATCC 24843) (Fission yeast).